Here is a 343-residue protein sequence, read N- to C-terminus: Heat-inducible transcription repressor HrcA (343 aa).

It belongs to the HrcA family.

Functionally, negative regulator of class I heat shock genes (grpE-dnaK-dnaJ and groELS operons). Prevents heat-shock induction of these operons. The sequence is that of Heat-inducible transcription repressor HrcA from Thermoanaerobacter sp. (strain X514).